Reading from the N-terminus, the 139-residue chain is ATP synthase epsilon chain (139 aa).

This sequence belongs to the ATPase epsilon chain family. In terms of assembly, F-type ATPases have 2 components, CF(1) - the catalytic core - and CF(0) - the membrane proton channel. CF(1) has five subunits: alpha(3), beta(3), gamma(1), delta(1), epsilon(1). CF(0) has three main subunits: a, b and c.

It localises to the cell membrane. Produces ATP from ADP in the presence of a proton gradient across the membrane. The chain is ATP synthase epsilon chain from Streptococcus pneumoniae serotype 2 (strain D39 / NCTC 7466).